The chain runs to 237 residues: Putative N-acetylmannosamine-6-phosphate 2-epimerase (237 aa).

It belongs to the NanE family.

It carries out the reaction an N-acyl-D-glucosamine 6-phosphate = an N-acyl-D-mannosamine 6-phosphate. It participates in amino-sugar metabolism; N-acetylneuraminate degradation; D-fructose 6-phosphate from N-acetylneuraminate: step 3/5. Converts N-acetylmannosamine-6-phosphate (ManNAc-6-P) to N-acetylglucosamine-6-phosphate (GlcNAc-6-P). The sequence is that of Putative N-acetylmannosamine-6-phosphate 2-epimerase from Caldanaerobacter subterraneus subsp. tengcongensis (strain DSM 15242 / JCM 11007 / NBRC 100824 / MB4) (Thermoanaerobacter tengcongensis).